A 5251-amino-acid polypeptide reads, in one-letter code: Dynein heavy chain-like protein 2 (5251 aa).

Kelch repeat units follow at residues 37–87 (GLFL…CYHN), 95–143 (YVII…LQNG), 266–317 (SLIL…IHGN), 318–367 (NLFI…LVES), and 372–421 (IIFI…QNNE). The tract at residues 140 to 188 (LQNGINGTNEKGYISQTDDENCSDNKYGENQDYGSNDSDSKDGEDIDKD) is disordered. The tract at residues 686-732 (NNIEQRNNNNDNNDNNNNDNNNNNNNDNNNNNNNNNNNNNNNNDNLN) is disordered. Low complexity predominate over residues 692-730 (NNNNDNNDNNNNDNNNNNNNDNNNNNNNNNNNNNNNNDN). Coiled coils occupy residues 1155-1225 (DNII…KKIK) and 1544-1610 (KLNN…KLIS). The tract at residues 1554 to 1598 (EKNKNANENSNEIETNKYNKKEELTNNRDGDGDDDDNIKNDKDEK) is disordered. The segment covering 1567-1583 (ETNKYNKKEELTNNRDG) has biased composition (basic and acidic residues). The stretch at 1639–1685 (HIKYTLKYYITNLFRLKDLFNNEKEKWIDENYLAQVFILCNTIFFVN) is one Kelch 6 repeat. Residues 1802 to 1825 (HQEGKQEYNNKNNDNDNNNNNNNN) form a disordered region. Low complexity predominate over residues 1810–1825 (NNKNNDNDNNNNNNNN). 1895-1902 (GPAGTGKT) contacts ATP. A coiled-coil region spans residues 2136 to 2188 (NDINENKKEKDNIEELKSDNVKEEKKTKKKHLEDNNNNKKKELFNLNNIEKEL). A disordered region spans residues 2152–2171 (KSDNVKEEKKTKKKHLEDNN). Residue 2224–2231 (GEAGCGKT) coordinates ATP. Residues 2447 to 2494 (VIWCFGGFLGEKDNVNYKKSFDKYWKNTFKSIKVNRKISVFDFYVENN) form a Kelch 7 repeat. Residues 2546–2553 (GKTGVGKT) and 2890–2897 (GIGGCGKT) contribute to the ATP site. Composition is skewed to low complexity over residues 3138–3154 (DNNNNNNNNRDNIDGNN) and 3652–3671 (DQNFINNNNNNNSSNNNSTN). Disordered stretches follow at residues 3138–3163 (DNNNNNNNNRDNIDGNNFFKNREGND), 3652–3686 (DQNFINNNNNNNSSNNNSTNFGYNEDPQKKDNHNN), 4042–4250 (EDND…EENV), 4280–4299 (NGKIDKDKEDDLEEEEDFEN), 4773–4824 (MDFH…ENEE), and 4910–4948 (KIIKKEKPGDNKDNKYTHDQKKETIHKEEDDEDEKHSGS). Residues 4059 to 4086 (KMEDEEKMEEEKVDEEKMEEEKVDEEKM) show a composition bias toward acidic residues. A compositionally biased stretch (basic and acidic residues) spans 4087–4247 (EDEKVEEKME…EKGEEQKAEE (161 aa)). 2 stretches are compositionally biased toward acidic residues: residues 4289–4299 (DDLEEEEDFEN) and 4807–4823 (DDDDESNNSNDNEEENE). Over residues 4912-4937 (IKKEKPGDNKDNKYTHDQKKETIHKE) the composition is skewed to basic and acidic residues.

Belongs to the dynein heavy chain family. In terms of assembly, consists of at least two heavy chains and a number of intermediate and light chains.

It is found in the cytoplasm. Its subcellular location is the cytoskeleton. Its function is as follows. Acts as a motor for the intracellular retrograde motility of vesicles and organelles along microtubules. Dynein has ATPase activity; the force-producing power stroke is thought to occur on release of ADP. The polypeptide is Dynein heavy chain-like protein 2 (Plasmodium falciparum (isolate 3D7)).